We begin with the raw amino-acid sequence, 347 residues long: Bombesin receptor-activated protein C6orf89 (347 aa).

The Cytoplasmic portion of the chain corresponds to 1–58 (MDLAANEISIYDKLSETVDLVRQTGHQCGMSEKAIEKFIRQLLEKNEPQRPPPQYPLL). A helical membrane pass occupies residues 59 to 79 (IVVYKVLATLGLILLTAYFVI). Topologically, residues 80-347 (QPFSPLAPEP…ICDGTAFSEL (268 aa)) are extracellular.

As to quaternary structure, homodimer. Interacts with BRS3. Interacts (via N-terminus) with SIN3B. In terms of processing, glycosylated.

It localises to the golgi apparatus membrane. Its subcellular location is the midbody. The protein localises to the cytoplasm. The protein resides in the nucleus. It is found in the nucleolus. Its function is as follows. Exhibits histone deacetylase (HDAC) enhancer properties. May play a role in cell cycle progression and wound repair of bronchial epithelial cells. This is Bombesin receptor-activated protein C6orf89 (C6orf89) from Homo sapiens (Human).